Consider the following 727-residue polypeptide: Calpain-like protease 1 (727 aa).

One can recognise a Calpain catalytic domain in the interval 70 to 317 (SRFYPPIPIS…FKQLYLNWNQ (248 aa)). Active-site residues include C128, H271, and N296.

Belongs to the peptidase C2 family. PalB/RIM13 subfamily. Interacts with SNF7, which may act together with RIM20 as a scaffold to recruit RIM13 to its substrate RIM101.

Required for the proteolytic cleavage of the transcriptional repressor RIM101 in response to alkaline ambient pH, which is necessary for sporulation and invasive growth. Probably the protease that cleaves RIM101. The protein is Calpain-like protease 1 (RIM13) of Saccharomyces cerevisiae (strain ATCC 204508 / S288c) (Baker's yeast).